A 144-amino-acid polypeptide reads, in one-letter code: Transcription antitermination protein NusB (144 aa).

This sequence belongs to the NusB family.

Involved in transcription antitermination. Required for transcription of ribosomal RNA (rRNA) genes. Binds specifically to the boxA antiterminator sequence of the ribosomal RNA (rrn) operons. The polypeptide is Transcription antitermination protein NusB (Pasteurella multocida (strain Pm70)).